A 200-amino-acid polypeptide reads, in one-letter code: Superoxide dismutase [Fe] (200 aa).

Fe cation contacts are provided by histidine 28, histidine 80, aspartate 162, and histidine 166.

It belongs to the iron/manganese superoxide dismutase family. In terms of assembly, homodimer. The cofactor is Fe cation.

It carries out the reaction 2 superoxide + 2 H(+) = H2O2 + O2. In terms of biological role, destroys superoxide anion radicals which are normally produced within the cells and which are toxic to biological systems. This is Superoxide dismutase [Fe] (sodB) from Nostoc sp. (strain PCC 7120 / SAG 25.82 / UTEX 2576).